The chain runs to 122 residues: Small ribosomal subunit protein uS13c (122 aa).

Residues 102–122 (RTRTNARTRRGAKKTVAGKKK) are disordered.

Belongs to the universal ribosomal protein uS13 family. Part of the 30S ribosomal subunit.

Its subcellular location is the plastid. It is found in the chloroplast. Located at the top of the head of the 30S subunit, it contacts several helices of the 16S rRNA. This Guillardia theta (Cryptophyte) protein is Small ribosomal subunit protein uS13c.